Consider the following 135-residue polypeptide: NADPH-dependent 7-cyano-7-deazaguanine reductase (135 aa).

C48 acts as the Thioimide intermediate in catalysis. The active-site Proton donor is the D55. Residues 70 to 72 (LEL) and 89 to 90 (HE) contribute to the substrate site.

Belongs to the GTP cyclohydrolase I family. QueF type 1 subfamily.

It is found in the cytoplasm. The enzyme catalyses 7-aminomethyl-7-carbaguanine + 2 NADP(+) = 7-cyano-7-deazaguanine + 2 NADPH + 3 H(+). The protein operates within tRNA modification; tRNA-queuosine biosynthesis. Catalyzes the NADPH-dependent reduction of 7-cyano-7-deazaguanine (preQ0) to 7-aminomethyl-7-deazaguanine (preQ1). The polypeptide is NADPH-dependent 7-cyano-7-deazaguanine reductase (Prochlorococcus marinus (strain SARG / CCMP1375 / SS120)).